The primary structure comprises 196 residues: RNA pyrophosphohydrolase (196 aa).

Positions 6–149 constitute a Nudix hydrolase domain; sequence GYRPNVGIVI…KRDVYRKVMK (144 aa). Positions 38 to 59 match the Nudix box motif; the sequence is GGINDNESAEQAMYRELHEEVG.

This sequence belongs to the Nudix hydrolase family. RppH subfamily. A divalent metal cation serves as cofactor.

Functionally, accelerates the degradation of transcripts by removing pyrophosphate from the 5'-end of triphosphorylated RNA, leading to a more labile monophosphorylated state that can stimulate subsequent ribonuclease cleavage. The polypeptide is RNA pyrophosphohydrolase (Haemophilus influenzae (strain PittEE)).